Here is a 614-residue protein sequence, read N- to C-terminus: MGSISPLPLTPDASCCPREVILEKYQQERKKRQLNCVPDNEATELHHKYAPVQGVDQPSYTRSPIITDSKVVIIGGGLAGLVTAVKLKTQGINDFVILEKGAECGGTWHWNQYPGAACDIESLIYLPLLEETGYVPQSRYSSGAEIRAHVARIILKWNLGEHICPLTQVTSTKWDESKLRWEVQTDHSDSLTCQFLVLATGLFHEPNLPRIPGSERFKGDQFHSGRWDYAVTGGDPAGSVPMDKLATKTVGVIGTGASGVQIVPRLAQDAKKLYVFQRTPSSITARDNYTMTPLMTEPVIQKPGWQRARMVQFCEMLEAEEHEMSDKDGTVAEGFDALSLRKVLNGMRKDDVAPAQMGELYARADISLMESIRKHVSNTVDDHETAEKLKPWYPFLCKRPVFQNDYLSSFNRSTVELVDTNGQGVSCLTEKGVVANGKEHEVDLLIYATGFDYEIGTPFYQRTRIHVFGSHGQTLDDAWADQGPSTLFGIHIRDFPNLLYIGPCQAGVTFNFTHTIYEAADHISHVIGDCLKDGASFQAIQPSIEAQSDWVKQTEEGSEMRLQYAQSCPPGYFNGHGRPEKIPARWGYYPKGIKAWANAMRECRAEGMKGLERW.

FAD-binding positions include glutamate 99, 107–110, aspartate 119, and tyrosine 125; that span reads TWHW. Residues 255-261, 278-279, and 398-399 contribute to the NADP(+) site; these read TGASGVQ, RT, and KR.

This sequence belongs to the FAD-binding monooxygenase family. FAD is required as a cofactor.

It catalyses the reaction gamma-lactone-2-keto[5.5.5.5]fenestrane + NADPH + O2 + H(+) = penifulvin A + NADP(+) + H2O. It participates in secondary metabolite biosynthesis; terpenoid biosynthesis. In terms of biological role, baeyer-Villiger monooxygenase; part of the gene cluster that mediates the biosynthesis of penifulvin A, a potent insecticidal sesquiterpene that features a [5.5.5.6]dioxafenestrane ring. Within the pathway, peniC is responsible for the final regioselective Baeyer-Villiger oxidation of gamma-lactone-2-keto[5.5.5.5]fenestran between C1 and C2 to form the delta-lactone moiety of penifulvin A. The first step of the pathway is performed by the sesquiterpene cyclase peniA that generates the angular triquinane scaffold silphinene via cyclization of the linear farnesyl pyrophosphate (FPP). The cytochrome P450 monooxygenase peniB and the flavin-dependent monooxygenase peniC then catalyze a series of oxidation reactions to transform silphinene into penifulvin A. In Penicillium patulum (Penicillium griseofulvum), this protein is Baeyer-Villiger monooxygenase peniC.